Reading from the N-terminus, the 592-residue chain is Catabolite repression protein creC (592 aa).

Positions 119–140 (NSALAAAPVKDPSKKRKPKNNI) are disordered. WD repeat units follow at residues 248 to 288 (INSS…ALFI), 327 to 368 (LANQ…DVFR), 369 to 408 (SYYG…IIAR), and 411 to 455 (GHDS…LHRP). Disordered stretches follow at residues 459-513 (HQTS…HPVE) and 556-592 (WDRP…MGSL). Polar residues-rich tracts occupy residues 484–499 (SSGN…TAAD) and 564–576 (SDNY…SETL). The stretch at 529–566 (VGEDPICWLGFQEDTIMTSSLEGHIRTWDRPRENISDN) is one WD 5 repeat.

The protein belongs to the WD repeat creC family. Interacts with creB.

In terms of biological role, component of the regulatory network controlling carbon source utilization through ubiquitination and deubiquitination involving creA, creB, creC, creD and acrB. Required to prevent the proteolysis of the CreB deubiquitinating enzyme in the absence of carbon catabolite repression. CreB deubiquitinating enzyme stabilized in a complex with the CreC leads to the expression of genes such as those in the proline and quinate pathways. This Emericella nidulans (strain FGSC A4 / ATCC 38163 / CBS 112.46 / NRRL 194 / M139) (Aspergillus nidulans) protein is Catabolite repression protein creC (creC).